A 166-amino-acid polypeptide reads, in one-letter code: Large ribosomal subunit protein uL10 (166 aa).

It belongs to the universal ribosomal protein uL10 family. Part of the ribosomal stalk of the 50S ribosomal subunit. The N-terminus interacts with L11 and the large rRNA to form the base of the stalk. The C-terminus forms an elongated spine to which L12 dimers bind in a sequential fashion forming a multimeric L10(L12)X complex.

Functionally, forms part of the ribosomal stalk, playing a central role in the interaction of the ribosome with GTP-bound translation factors. This Bacillus pumilus (strain SAFR-032) protein is Large ribosomal subunit protein uL10.